We begin with the raw amino-acid sequence, 216 residues long: Probable GTP-binding protein EngB (216 aa).

Residues 37-214 (DGLEVAFAGR…RAAMIRLLDE (178 aa)) form the EngB-type G domain. GTP is bound by residues 45-52 (GRSNVGKS), 72-76 (GRTQE), 92-95 (DMPG), 159-162 (TKAD), and 193-195 (TSS). 2 residues coordinate Mg(2+): serine 52 and threonine 74.

Belongs to the TRAFAC class TrmE-Era-EngA-EngB-Septin-like GTPase superfamily. EngB GTPase family. Mg(2+) is required as a cofactor.

In terms of biological role, necessary for normal cell division and for the maintenance of normal septation. This is Probable GTP-binding protein EngB from Rhodopseudomonas palustris (strain HaA2).